Consider the following 153-residue polypeptide: Interleukin-4 (153 aa).

Positions 1–24 are cleaved as a signal peptide; the sequence is MGLTSQLLPPLFFLLACAGNFAHG. Cystine bridges form between Cys27–Cys151, Cys48–Cys89, and Cys70–Cys123. An N-linked (GlcNAc...) asparagine glycan is attached at Asn62. The N-linked (GlcNAc...) asparagine glycan is linked to Asn129.

Belongs to the IL-4/IL-13 family.

The protein resides in the secreted. Participates in at least several B-cell activation processes as well as of other cell types. It is a costimulator of DNA-synthesis. It induces the expression of class II MHC molecules on resting B-cells. It enhances both secretion and cell surface expression of IgE and IgG1. It also regulates the expression of the low affinity Fc receptor for IgE (CD23) on both lymphocytes and monocytes. Positively regulates IL31RA expression in macrophages. Stimulates autophagy in dendritic cells by interfering with mTORC1 signaling and through the induction of RUFY4. This Macaca mulatta (Rhesus macaque) protein is Interleukin-4 (IL4).